A 466-amino-acid chain; its full sequence is Alpha-galacturonidase (466 aa).

NAD(+) is bound at residue 11–78; sequence VKIAYIGGGS…GKWNYETANT (68 aa). Asparagine 157 is a binding site for substrate. Residue cysteine 179 coordinates Mn(2+). Histidine 180 serves as the catalytic Proton donor. Residue histidine 216 coordinates Mn(2+).

This sequence belongs to the glycosyl hydrolase 4 family. As to quaternary structure, homotetramer. NAD(+) serves as cofactor. Mn(2+) is required as a cofactor.

The catalysed reaction is [(1-&gt;4)-alpha-D-galacturonosyl](n) + H2O = alpha-D-galacturonate + [(1-&gt;4)-alpha-D-galacturonosyl](n-1). Functionally, alpha-galacturonidase able to catalyze the hydrolysis of the chromogenic substrate p-nitrophenyl-alpha-D-galacturonic acid (pNPalphaGalUA). It is probable that alpha-1,4-di-galacturonate (GalUA(2)) is the naturally occurring substrate. In Lachnoclostridium phytofermentans (strain ATCC 700394 / DSM 18823 / ISDg) (Clostridium phytofermentans), this protein is Alpha-galacturonidase.